A 385-amino-acid chain; its full sequence is A-type ATP synthase subunit C (385 aa).

Belongs to the V-ATPase V0D/AC39 subunit family. As to quaternary structure, has multiple subunits with at least A(3), B(3), C, D, E, F, H, I and proteolipid K(x).

Its subcellular location is the cell membrane. Its function is as follows. Component of the A-type ATP synthase that produces ATP from ADP in the presence of a proton gradient across the membrane. This chain is A-type ATP synthase subunit C, found in Methanosphaera stadtmanae (strain ATCC 43021 / DSM 3091 / JCM 11832 / MCB-3).